The chain runs to 458 residues: Bifunctional protein GlmU (458 aa).

The interval 1-232 (MISPLSVIIL…TFEIEGVNNR (232 aa)) is pyrophosphorylase. UDP-N-acetyl-alpha-D-glucosamine is bound by residues 10–13 (LAAG), Lys24, Gln79, 84–85 (GT), 106–108 (YGD), Gly142, Glu157, Asn172, and Asn230. Asp108 is a Mg(2+) binding site. Asn230 serves as a coordination point for Mg(2+). Residues 233–253 (QQLASLERTWQGKLVADLQEA) form a linker region. The interval 254-458 (GVQFADPTRV…KDNFQRPTKK (205 aa)) is N-acetyltransferase. 2 residues coordinate UDP-N-acetyl-alpha-D-glucosamine: Arg336 and Lys354. His366 functions as the Proton acceptor in the catalytic mechanism. Residues Tyr369 and Asn380 each contribute to the UDP-N-acetyl-alpha-D-glucosamine site. Residues Ala383, 389 to 390 (NY), Ser408, Ala426, and Arg443 each bind acetyl-CoA.

This sequence in the N-terminal section; belongs to the N-acetylglucosamine-1-phosphate uridyltransferase family. In the C-terminal section; belongs to the transferase hexapeptide repeat family. In terms of assembly, homotrimer. Mg(2+) serves as cofactor.

It localises to the cytoplasm. It catalyses the reaction alpha-D-glucosamine 1-phosphate + acetyl-CoA = N-acetyl-alpha-D-glucosamine 1-phosphate + CoA + H(+). The enzyme catalyses N-acetyl-alpha-D-glucosamine 1-phosphate + UTP + H(+) = UDP-N-acetyl-alpha-D-glucosamine + diphosphate. Its pathway is nucleotide-sugar biosynthesis; UDP-N-acetyl-alpha-D-glucosamine biosynthesis; N-acetyl-alpha-D-glucosamine 1-phosphate from alpha-D-glucosamine 6-phosphate (route II): step 2/2. The protein operates within nucleotide-sugar biosynthesis; UDP-N-acetyl-alpha-D-glucosamine biosynthesis; UDP-N-acetyl-alpha-D-glucosamine from N-acetyl-alpha-D-glucosamine 1-phosphate: step 1/1. It functions in the pathway bacterial outer membrane biogenesis; LPS lipid A biosynthesis. In terms of biological role, catalyzes the last two sequential reactions in the de novo biosynthetic pathway for UDP-N-acetylglucosamine (UDP-GlcNAc). The C-terminal domain catalyzes the transfer of acetyl group from acetyl coenzyme A to glucosamine-1-phosphate (GlcN-1-P) to produce N-acetylglucosamine-1-phosphate (GlcNAc-1-P), which is converted into UDP-GlcNAc by the transfer of uridine 5-monophosphate (from uridine 5-triphosphate), a reaction catalyzed by the N-terminal domain. The protein is Bifunctional protein GlmU of Psychrobacter arcticus (strain DSM 17307 / VKM B-2377 / 273-4).